A 100-amino-acid chain; its full sequence is Urease subunit gamma (100 aa).

It belongs to the urease gamma subunit family. In terms of assembly, heterotrimer of UreA (gamma), UreB (beta) and UreC (alpha) subunits. Three heterotrimers associate to form the active enzyme.

The protein resides in the cytoplasm. It carries out the reaction urea + 2 H2O + H(+) = hydrogencarbonate + 2 NH4(+). The protein operates within nitrogen metabolism; urea degradation; CO(2) and NH(3) from urea (urease route): step 1/1. The sequence is that of Urease subunit gamma from Haemophilus influenzae (strain 86-028NP).